Consider the following 506-residue polypeptide: Dolichyl pyrophosphate Glc1Man9GlcNAc2 alpha-1,3-glucosyltransferase (506 aa).

The next 12 membrane-spanning stretches (helical) occupy residues 10 to 30 (RLLL…IPSS), 101 to 121 (VIYF…YGVY), 133 to 153 (NLIC…HIHF), 176 to 196 (LLGG…AVTA), 219 to 239 (LVTI…PFIY), 261 to 281 (YWAP…AVLL), 305 to 325 (PFAV…LLAI), 339 to 359 (GLVA…GWHV), 384 to 401 (HYFL…PLLY), 406 to 426 (YPIK…GFAA), 454 to 474 (YLMG…YFLG), and 479 to 499 (FLPL…SWIW).

The protein belongs to the ALG6/ALG8 glucosyltransferase family.

Its subcellular location is the endoplasmic reticulum membrane. It catalyses the reaction an alpha-D-Glc-(1-&gt;3)-alpha-D-Man-(1-&gt;2)-alpha-D-Man-(1-&gt;2)-alpha-D-Man-(1-&gt;3)-[alpha-D-Man-(1-&gt;2)-alpha-D-Man-(1-&gt;3)-[alpha-D-Man-(1-&gt;2)-alpha-D-Man-(1-&gt;6)]-alpha-D-Man-(1-&gt;6)]-beta-D-Man-(1-&gt;4)-beta-D-GlcNAc-(1-&gt;4)-alpha-D-GlcNAc-diphospho-di-trans,poly-cis-dolichol + a di-trans,poly-cis-dolichyl beta-D-glucosyl phosphate = an alpha-D-Glc-(1-&gt;3)-alpha-D-Glc-(1-&gt;3)-alpha-D-Man-(1-&gt;2)-alpha-D-Man-(1-&gt;2)-alpha-D-Man-(1-&gt;3)-[alpha-D-Man-(1-&gt;2)-alpha-D-Man-(1-&gt;3)-[alpha-D-Man-(1-&gt;2)-alpha-D-Man-(1-&gt;6)]-alpha-D-Man-(1-&gt;6)]-beta-D-Man-(1-&gt;4)-beta-D-GlcNAc-(1-&gt;4)-alpha-D-GlcNAc-diphospho-di-trans,poly-cis-dolichol + a di-trans,poly-cis-dolichyl phosphate + H(+). It functions in the pathway protein modification; protein glycosylation. Its function is as follows. Dolichyl pyrophosphate Glc1Man9GlcNAc2 alpha-1,3-glucosyltransferase that operates in the biosynthetic pathway of dolichol-linked oligosaccharides, the glycan precursors employed in protein asparagine (N)-glycosylation. The assembly of dolichol-linked oligosaccharides begins on the cytosolic side of the endoplasmic reticulum membrane and finishes in its lumen. The sequential addition of sugars to dolichol pyrophosphate produces dolichol-linked oligosaccharides containing fourteen sugars, including two GlcNAcs, nine mannoses and three glucoses. Once assembled, the oligosaccharide is transferred from the lipid to nascent proteins by oligosaccharyltransferases. In the lumen of the endoplasmic reticulum, adds the second glucose residue from dolichyl phosphate glucose (Dol-P-Glc) onto the lipid-linked oligosaccharide intermediate Glc(1)Man(9)GlcNAc(2)-PP-Dol to produce Glc(2)Man(9)GlcNAc(2)-PP-Dol. The sequence is that of Dolichyl pyrophosphate Glc1Man9GlcNAc2 alpha-1,3-glucosyltransferase from Arabidopsis thaliana (Mouse-ear cress).